The primary structure comprises 121 residues: Glycine cleavage system H protein (121 aa).

One can recognise a Lipoyl-binding domain in the interval 22–102 (IAWVGITKYA…DSSVWLFKAE (81 aa)). Lysine 63 is modified (N6-lipoyllysine).

It belongs to the GcvH family. The glycine cleavage system is composed of four proteins: P, T, L and H. It depends on (R)-lipoate as a cofactor.

Functionally, the glycine cleavage system catalyzes the degradation of glycine. The H protein shuttles the methylamine group of glycine from the P protein to the T protein. The protein is Glycine cleavage system H protein of Tropheryma whipplei (strain TW08/27) (Whipple's bacillus).